Reading from the N-terminus, the 300-residue chain is Porphobilinogen deaminase (300 aa).

The residue at position 239 (Cys239) is an S-(dipyrrolylmethanemethyl)cysteine.

Belongs to the HMBS family. In terms of assembly, monomer. Requires dipyrromethane as cofactor.

It catalyses the reaction 4 porphobilinogen + H2O = hydroxymethylbilane + 4 NH4(+). Its pathway is porphyrin-containing compound metabolism; protoporphyrin-IX biosynthesis; coproporphyrinogen-III from 5-aminolevulinate: step 2/4. Tetrapolymerization of the monopyrrole PBG into the hydroxymethylbilane pre-uroporphyrinogen in several discrete steps. In Francisella tularensis subsp. tularensis (strain WY96-3418), this protein is Porphobilinogen deaminase.